Reading from the N-terminus, the 172-residue chain is Translationally-controlled tumor protein homolog (172 aa).

The 172-residue stretch at 1–172 folds into the TCTP domain; it reads MIIYKDCITE…FKDGLIIEKC (172 aa).

This sequence belongs to the TCTP family.

The protein resides in the cytoplasm. In terms of biological role, involved in calcium binding and microtubule stabilization. This chain is Translationally-controlled tumor protein homolog (tpt1), found in Xenopus laevis (African clawed frog).